The primary structure comprises 212 residues: ER lumen protein-retaining receptor 2 (212 aa).

Residues 1–4 (MNVF) are Lumenal-facing. The helical transmembrane segment at 5–24 (RLSGDLSHLAAIIILLLKIW) threads the bilayer. The Cytoplasmic segment spans residues 25-32 (KSRSCAGI). Residues 33 to 52 (SGKSQLLFALVFTTRYLDLL) form a helical membrane-spanning segment. The segment at 47-48 (RY) is interaction with the K-D-E-L motif on target proteins. The Lumenal segment spans residues 53–58 (TSFISL). The helical transmembrane segment at 59–79 (YNTSMKVIYIGCAYATVYLIY) threads the bilayer. Residues 80–92 (MKFKATYDGNHDT) are Cytoplasmic-facing. A helical membrane pass occupies residues 93 to 110 (FRVEFLVVPVGGLSVLVN). Topologically, residues 111 to 116 (HDFSPL) are lumenal. A helical transmembrane segment spans residues 117 to 135 (EILWTFSIYLESVAILPQL). Residues 136-149 (FMISKTGEAETITT) lie on the Cytoplasmic side of the membrane. Residues 150–168 (HYLFFLGLYRALYLFNWIW) form a helical membrane-spanning segment. The interval 159–169 (RALYLFNWIWR) is interaction with the K-D-E-L motif on target proteins. Residues 169 to 178 (RYSFEGFFDL) lie on the Lumenal side of the membrane. Residues 179-199 (IAIVAGVVQTILYCDFFYLYV) traverse the membrane as a helical segment. Over 200–212 (TKVLKGKKLSLPA) the chain is Cytoplasmic. The segment at 204 to 207 (KGKK) is important for recycling of cargo proteins with the sequence motif K-D-E-L from the Golgi to the endoplasmic reticulum.

Belongs to the ERD2 family.

It localises to the endoplasmic reticulum membrane. The protein localises to the golgi apparatus membrane. Its subcellular location is the cytoplasmic vesicle. The protein resides in the COPI-coated vesicle membrane. Functionally, receptor for the C-terminal sequence motif K-D-E-L that is present on endoplasmic reticulum resident proteins and that mediates their recycling from the Golgi back to the endoplasmic reticulum. Binding is pH dependent, and is optimal at pH 5-5.4. This chain is ER lumen protein-retaining receptor 2 (kdelr2), found in Xenopus tropicalis (Western clawed frog).